Reading from the N-terminus, the 275-residue chain is NifU-like protein 5, mitochondrial (275 aa).

A mitochondrion-targeting transit peptide spans 1–61; sequence MKGLTRLLNS…TNASRNCSRS (61 aa).

The protein belongs to the NifU family.

It localises to the mitochondrion. Molecular scaffold for [Fe-S] cluster assembly of mitochondrial iron-sulfur proteins. This chain is NifU-like protein 5, mitochondrial (NIFU5), found in Arabidopsis thaliana (Mouse-ear cress).